The following is a 183-amino-acid chain: Large ribosomal subunit protein eL18 (183 aa).

The tract at residues 151-183 (HFGPAPGAPRSHTKPYVRSKGHEQAKPSRRSNV) is disordered.

Belongs to the eukaryotic ribosomal protein eL18 family.

Its subcellular location is the cytoplasm. The polypeptide is Large ribosomal subunit protein eL18 (RpL18) (Plutella xylostella (Diamondback moth)).